The following is a 241-amino-acid chain: Ribosomal RNA large subunit methyltransferase E (241 aa).

S-adenosyl-L-methionine contacts are provided by glycine 88, tryptophan 90, aspartate 111, aspartate 127, and aspartate 151. The active-site Proton acceptor is the lysine 191.

It belongs to the class I-like SAM-binding methyltransferase superfamily. RNA methyltransferase RlmE family.

It localises to the cytoplasm. It carries out the reaction uridine(2552) in 23S rRNA + S-adenosyl-L-methionine = 2'-O-methyluridine(2552) in 23S rRNA + S-adenosyl-L-homocysteine + H(+). Its function is as follows. Specifically methylates the uridine in position 2552 of 23S rRNA at the 2'-O position of the ribose in the fully assembled 50S ribosomal subunit. The protein is Ribosomal RNA large subunit methyltransferase E of Bartonella quintana (strain Toulouse) (Rochalimaea quintana).